Reading from the N-terminus, the 399-residue chain is Integral membrane protein GPR137B (399 aa).

The disordered stretch occupies residues Met-1–Asp-22. Residues Met-1–Thr-46 are Lumenal-facing. An N-linked (GlcNAc...) asparagine glycan is attached at Asn-26. A helical transmembrane segment spans residues Val-47–Val-67. At Leu-68–Ser-79 the chain is on the cytoplasmic side. A helical membrane pass occupies residues Val-80–Phe-100. Topologically, residues Lys-101–Pro-111 are lumenal. Residues Phe-112 to Met-132 form a helical membrane-spanning segment. At Asn-133–Tyr-159 the chain is on the cytoplasmic side. The chain crosses the membrane as a helical span at residues Leu-160–Val-180. At Lys-181–Lys-188 the chain is on the lumenal side. Residues Val-189–Leu-209 traverse the membrane as a helical segment. Topologically, residues Ser-210–Thr-237 are cytoplasmic. The chain crosses the membrane as a helical span at residues Ala-238–Leu-258. At Ser-259–Val-292 the chain is on the lumenal side. 2 N-linked (GlcNAc...) asparagine glycosylation sites follow: Asn-263 and Asn-275. The chain crosses the membrane as a helical span at residues Leu-293–Phe-313. The Cytoplasmic segment spans residues Arg-314–Gly-399.

It belongs to the GPR137 family. As to quaternary structure, interaction with RRAGA; increases RRAGA recruitment to lysosomes. Interacts with MTOR; this interaction is amino acid sensitive. As to expression, expressed in kidney, heart, brain and placenta.

It is found in the lysosome membrane. Its function is as follows. Lysosomal integral membrane protein that regulates the localization and activity of mTORC1, a signaling complex promoting cell growth in response to growth factors, energy levels, and amino acids. Interacts with Rag GTPases and increases the lysosomial localization and activity of Rag GTPases and thereby regulates mTORC1 translocation and activity in lysosome. Involved in the regulation of lysosomal morphology and autophagy. In terms of biological role, also acts as a negative regulator of osteoclast activity. Involved in interleukin-4-induced M2 macrophage polarization. The protein is Integral membrane protein GPR137B (GPR137B) of Homo sapiens (Human).